The primary structure comprises 268 residues: Undecaprenyl-diphosphatase (268 aa).

Helical transmembrane passes span 5-25 (SIISALVLGLIEGLTEFIPVS), 43-63 (GNTFAVLIQLGAILAILLVYF), 84-104 (FSVLIAFLPAALIGAAAHGFI), 106-126 (AVLFETPMLICVVLIVGGVIL), 184-204 (AAEFSFFLAMPTMLGAFTLDL), 213-233 (FDDIGVIAIGFIAAFVAGIVV), and 248-268 (PFAIWRIVVGTAGLVGLWLVG).

This sequence belongs to the UppP family.

It is found in the cell inner membrane. The catalysed reaction is di-trans,octa-cis-undecaprenyl diphosphate + H2O = di-trans,octa-cis-undecaprenyl phosphate + phosphate + H(+). Its function is as follows. Catalyzes the dephosphorylation of undecaprenyl diphosphate (UPP). Confers resistance to bacitracin. The protein is Undecaprenyl-diphosphatase of Sinorhizobium fredii (strain NBRC 101917 / NGR234).